We begin with the raw amino-acid sequence, 276 residues long: Undecaprenyl-diphosphatase (276 aa).

5 consecutive transmembrane segments (helical) span residues 84–104 (YRLG…GLFF), 115–135 (LWVV…AEYV), 188–208 (FGFL…LPDA), 222–242 (QLLV…AWLL), and 250–270 (MYWF…LLAT).

Belongs to the UppP family.

Its subcellular location is the cell membrane. The enzyme catalyses di-trans,octa-cis-undecaprenyl diphosphate + H2O = di-trans,octa-cis-undecaprenyl phosphate + phosphate + H(+). Catalyzes the dephosphorylation of undecaprenyl diphosphate (UPP). Confers resistance to bacitracin. The protein is Undecaprenyl-diphosphatase of Mycobacterium tuberculosis (strain ATCC 25177 / H37Ra).